The following is a 398-amino-acid chain: MWLLLTMASLISVLGTTHGLFGKLHPGSPEVTMNISQMITYWGYPNEEYEVVTEDGYILEVNRIPYGKKNSGNTGQRPVVFLQHGLLASATNWISNLPNNSLAFILADAGYDVWLGNSRGNTWARRNLYYSPDSVEFWAFSFDEMAKYDLPATIDFIVKKTGQKQLHYVGHSQGTTIGFIAFSTNPSLAKRIKTFYALAPVATVKYTKSLINKLRFVPQSLFKFIFGDKIFYPHNFFDQFLATEVCSREMLNLLCSNALFIICGFDSKNFNTSRLDVYLSHNPAGTSVQNMFHWTQAVKSGKFQAYDWGSPVQNRMHYDQSQPPYYNVTAMNVPIAVWNGGKDLLADPQDVGLLLPKLPNLIYHKEIPFYNHLDFIWAMDAPQEVYNDIVSMISEDKK.

The first 19 residues, 1–19 (MWLLLTMASLISVLGTTHG), serve as a signal peptide directing secretion. 2 N-linked (GlcNAc...) asparagine glycosylation sites follow: asparagine 34 and asparagine 99. Residues 78–377 (PVVFLQHGLL…PFYNHLDFIW (300 aa)) form the AB hydrolase-1 domain. The active-site Nucleophile is the serine 172. A disulfide bridge connects residues cysteine 246 and cysteine 255. N-linked (GlcNAc...) asparagine glycosylation is found at asparagine 271 and asparagine 327. Active-site charge relay system residues include aspartate 343 and histidine 372.

This sequence belongs to the AB hydrolase superfamily. Lipase family.

The protein localises to the secreted. The catalysed reaction is a triacylglycerol + H2O = a diacylglycerol + a fatty acid + H(+). The enzyme catalyses 1,2,3-tri-(9Z-octadecenoyl)-glycerol + H2O = 1,2-di-(9Z-octadecenoyl)-sn-glycerol + (9Z)-octadecenoate + H(+). It catalyses the reaction 1,2,3-trioctanoylglycerol + H2O = 1,2-dioctanoyl-sn-glycerol + octanoate + H(+). Functionally, catalyzes the hydrolysis of triacylglycerols to yield free fatty acids, diacylglycerol, monoacylglycerol, and glycerol. Shows a preferential hydrolysis at the sn-3 position of triacylglycerol. This is Gastric triacylglycerol lipase (LIPF) from Homo sapiens (Human).